The sequence spans 479 residues: Glutamate--tRNA ligase (479 aa).

A 'HIGH' region motif is present at residues 21–31 (PSPTGYLHVGG). The 'KMSKS' region motif lies at 248–252 (KLSKR). Position 251 (Lys251) interacts with ATP.

Belongs to the class-I aminoacyl-tRNA synthetase family. Glutamate--tRNA ligase type 1 subfamily. As to quaternary structure, monomer.

It localises to the cytoplasm. It catalyses the reaction tRNA(Glu) + L-glutamate + ATP = L-glutamyl-tRNA(Glu) + AMP + diphosphate. Functionally, catalyzes the attachment of glutamate to tRNA(Glu) in a two-step reaction: glutamate is first activated by ATP to form Glu-AMP and then transferred to the acceptor end of tRNA(Glu). The protein is Glutamate--tRNA ligase of Haemophilus ducreyi (strain 35000HP / ATCC 700724).